The primary structure comprises 319 residues: Geranylgeranyl pyrophosphate synthase (319 aa).

Isopentenyl diphosphate-binding residues include Lys42, Arg45, and His74. Positions 81 and 85 each coordinate Mg(2+). Arg90 lines the dimethylallyl diphosphate pocket. Arg91 serves as a coordination point for isopentenyl diphosphate. 5 residues coordinate dimethylallyl diphosphate: Lys172, Thr173, Gln210, Lys226, and Lys236.

This sequence belongs to the FPP/GGPP synthase family. As to quaternary structure, homodimer. Mg(2+) is required as a cofactor.

The enzyme catalyses isopentenyl diphosphate + dimethylallyl diphosphate = (2E)-geranyl diphosphate + diphosphate. It catalyses the reaction isopentenyl diphosphate + (2E)-geranyl diphosphate = (2E,6E)-farnesyl diphosphate + diphosphate. It carries out the reaction isopentenyl diphosphate + (2E,6E)-farnesyl diphosphate = (2E,6E,10E)-geranylgeranyl diphosphate + diphosphate. The protein operates within isoprenoid biosynthesis; geranyl diphosphate biosynthesis; geranyl diphosphate from dimethylallyl diphosphate and isopentenyl diphosphate: step 1/1. It participates in isoprenoid biosynthesis; farnesyl diphosphate biosynthesis; farnesyl diphosphate from geranyl diphosphate and isopentenyl diphosphate: step 1/1. Its pathway is isoprenoid biosynthesis; geranylgeranyl diphosphate biosynthesis; geranylgeranyl diphosphate from farnesyl diphosphate and isopentenyl diphosphate: step 1/1. Functionally, catalyzes the addition of 3 molecules of isopentenyl diphosphate (IPP) onto dimethylallyl diphosphate (DMAPP) to form geranylgeranyl pyrophosphate (GGPP). Catalyzes the synthesis of geranylgeranyl pyrophosphate as a major product and of farnesyl pyrophosphate in smaller amounts. The sequence is that of Geranylgeranyl pyrophosphate synthase from Geoglobus acetivorans.